We begin with the raw amino-acid sequence, 289 residues long: Enoyl-CoA hydratase domain-containing protein 3, mitochondrial (289 aa).

The N-terminal 14 residues, 1–14 (MLLRGFSELLKCRG), are a transit peptide targeting the mitochondrion.

This sequence belongs to the enoyl-CoA hydratase/isomerase family.

It is found in the mitochondrion. Functionally, may play a role in fatty acid biosynthesis and insulin sensitivity. The protein is Enoyl-CoA hydratase domain-containing protein 3, mitochondrial (echdc3) of Danio rerio (Zebrafish).